The sequence spans 367 residues: RNA-binding protein 48 (367 aa).

One can recognise an RRM domain in the interval 46–124 (QYLLIQGVPA…GLLHVCYAPE (79 aa)). The span at 217-228 (PVDRASDSSKDG) shows a compositional bias: basic and acidic residues. Disordered regions lie at residues 217–243 (PVDR…HNGS), 277–303 (RTTQ…TNPS), and 339–367 (EVIS…RRRI). The span at 347–356 (PPEDKPEDVN) shows a compositional bias: basic and acidic residues.

The protein belongs to the RBM48 family. Component of the minor spliceosome. Within this complex, interacts with ARMC7 and PRPF8/PRP8.

As a component of the minor spliceosome, involved in the splicing of U12-type introns in pre-mRNAs. The polypeptide is RNA-binding protein 48 (RBM48) (Pongo abelii (Sumatran orangutan)).